The sequence spans 198 residues: Snake venom metalloproteinase neuwiedase (198 aa).

The Peptidase M12B domain maps to 8–198 (RYIELVIVAD…QTFLTNHNPQ (191 aa)). E11 and D95 together coordinate Ca(2+). H144 lines the Zn(2+) pocket. Residue E145 is part of the active site. Zn(2+)-binding residues include H148 and H154. Disulfide bonds link C159-C183 and C161-C166.

It belongs to the venom metalloproteinase (M12B) family. P-I subfamily. It depends on Zn(2+) as a cofactor. Expressed by the venom gland.

The protein localises to the secreted. Inhibited by EDTA, EGTA and 1,10-phenanthroline, partially inhibited by beta-mercaptoethanol and not inhibited by serine protease inhibitors (leupeptin and aprotinin). Also inhibited by an excess of zinc, mercury and magnesium ions. Extracts of the plant Casearia mariquitensis neutralizes the decrease of platelets and plasma fibrinogen induced by the protease. The same extracts also partially inhibit Bbeta chain cleavage, but not Aalpha chain cleavage. In terms of biological role, this metalloprotease hydrolyzes the Aalpha chain of fibrin and fibrinogen first followed by the Bbeta chain and shows no effect on the gamma chain. It is also able to degrade type I collagen, fibronectin, laminin and induces inflammatory reaction. It is devoid of hemorrhagic and thrombotic activities, except in lung where it induces pulmonary bleeding. It also induces a mild myotoxic reaction. It is not able to inhibit platelet aggregation, but it induces decrease of platelets and plasma fibrinogen. It contributes to local tissue damage by inducing edema, inflammatory infiltrate and mild myotoxicity, and by degrading extracellular matrix components. In Bothrops pauloensis (Neuwied's lancehead), this protein is Snake venom metalloproteinase neuwiedase.